A 647-amino-acid polypeptide reads, in one-letter code: Probable cobalt/nickel-exporting P-type ATPase (647 aa).

The next 5 helical transmembrane spans lie at 33–53 (WAAA…LGAP), 55–75 (AVVW…PAWV), 94–114 (AAIG…IVIF), 260–280 (AGVV…GADL), and 291–311 (MIVA…LSAI). Catalysis depends on Asp339, which acts as the 4-aspartylphosphate intermediate. Positions 532 and 536 each coordinate Mg(2+). A helical transmembrane segment spans residues 587-607 (VIANLVMAGAAITTLVLWDLF).

Belongs to the cation transport ATPase (P-type) (TC 3.A.3) family. Type IB subfamily.

It localises to the cell membrane. The enzyme catalyses Ni(2+)(out) + ATP + H2O = Ni(2+)(in) + ADP + phosphate + H(+). It catalyses the reaction Co(2+)(out) + ATP + H2O = Co(2+)(in) + ADP + phosphate + H(+). Its function is as follows. Involved in heavy metal homeostasis. Probably exports nickel and cobalt ions out of the cell. In Mycolicibacterium smegmatis (strain ATCC 700084 / mc(2)155) (Mycobacterium smegmatis), this protein is Probable cobalt/nickel-exporting P-type ATPase (ctpD).